The following is an 882-amino-acid chain: Translation initiation factor IF-2 (882 aa).

The tract at residues 38 to 294 (IEDSQASWVK…KSKHKRKKEN (257 aa)) is disordered. Basic and acidic residues-rich tracts occupy residues 66–76 (TRDEAVKKHSG), 109–128 (GRRE…ERHS), and 207–219 (PDNK…DAKR). Residues 282-292 (PGRKSKHKRKK) are compositionally biased toward basic residues. The region spanning 383–556 (ARPPVVTIMG…EMNEIRANPD (174 aa)) is the tr-type G domain. A G1 region spans residues 392-399 (GHVDHGKT). 392–399 (GHVDHGKT) contributes to the GTP binding site. The tract at residues 417-421 (GITQH) is G2. The interval 438-441 (DTPG) is G3. Residues 438 to 442 (DTPGH) and 492 to 495 (NKID) contribute to the GTP site. The interval 492–495 (NKID) is G4. Positions 528-530 (SAK) are G5.

The protein belongs to the TRAFAC class translation factor GTPase superfamily. Classic translation factor GTPase family. IF-2 subfamily.

It is found in the cytoplasm. Functionally, one of the essential components for the initiation of protein synthesis. Protects formylmethionyl-tRNA from spontaneous hydrolysis and promotes its binding to the 30S ribosomal subunits. Also involved in the hydrolysis of GTP during the formation of the 70S ribosomal complex. This chain is Translation initiation factor IF-2, found in Syntrophomonas wolfei subsp. wolfei (strain DSM 2245B / Goettingen).